A 315-amino-acid polypeptide reads, in one-letter code: Homocysteine S-methyltransferase YbgG (315 aa).

A Hcy-binding domain is found at 2 to 309; it reads NPIQHILDTY…ENIQEIAAWA (308 aa). Residues Cys-229, Cys-294, and Cys-295 each contribute to the Zn(2+) site.

Zn(2+) serves as cofactor.

It carries out the reaction S-methyl-L-methionine + L-homocysteine = 2 L-methionine + H(+). The sequence is that of Homocysteine S-methyltransferase YbgG (ybgG) from Bacillus subtilis (strain 168).